A 648-amino-acid chain; its full sequence is MRIAKILLPAAKLFPLDYLIPESLVLNIGDLVIVPFRSKELTGIVWEFATIPEASKLKTVKEKVPLDLSITSEVLELIKWLSSYYMSELGSIAKLVLPIDIAEKPIKVKEQKVNNSFVLPDLSEEQKQAVTILNESNKPTLIKGVTGSGKTEIYFHLIADYLVKGKQVLIMLPEIALSTQIINRFIERFGFEPIIWNSSVTKAQKKMILRGILSDKVKVVIGARSSLFLPFKNLGLVVIDEEHDDSYKQDDGILYNARDTAIVRGTFDKAQIVLCSATPSIETMYNIEIGKYQLVTLVNRYNNVDLPNIEIIDMTKEKLSKNSYLSKILIEAIKDNLDNKKQVLLFLNRRGYAPLMLCKACGHRFTCKFCSSWMVVHKATKKLECHHCGYQSKIFSSCPECLEDETLTICGPGIERIEEEAKALFPENKIAVISKDHAKNPERIAQLLHQMENLEIDILIGTQMITKGYHFPNLTLVGVIDADLGSNNADLRASERTFQLLHQVGGRAGRGDGKGVVYLQSYYPDNIIFSYVKAGDEDSFFANELEIRKSADMPPFSKTASVILSGSNESKILEIARAMVRIAPKANVKILGPASSLMSKLAGKYRYRILIIADKKFNLQKYLKFWLSLIKIPSFCHLKIDIDPKSFY.

Positions 131-297 (TILNESNKPT…EIGKYQLVTL (167 aa)) constitute a Helicase ATP-binding domain. Position 144–151 (144–151 (GVTGSGKT)) interacts with ATP. Positions 240–243 (DEEH) match the DEAH box motif. Zn(2+)-binding residues include cysteine 358, cysteine 361, cysteine 367, cysteine 370, cysteine 385, cysteine 388, cysteine 398, and cysteine 401. The region spanning 393-548 (KIFSSCPECL…SFFANELEIR (156 aa)) is the Helicase C-terminal domain.

Belongs to the helicase family. PriA subfamily. Component of the replication restart primosome. It depends on Zn(2+) as a cofactor.

The catalysed reaction is Couples ATP hydrolysis with the unwinding of duplex DNA by translocating in the 3'-5' direction.. It catalyses the reaction ATP + H2O = ADP + phosphate + H(+). In terms of biological role, initiates the restart of stalled replication forks, which reloads the replicative helicase on sites other than the origin of replication. Recognizes and binds to abandoned replication forks and remodels them to uncover a helicase loading site. Promotes assembly of the primosome at these replication forks. The chain is Replication restart protein PriA from Rickettsia felis (strain ATCC VR-1525 / URRWXCal2) (Rickettsia azadi).